Reading from the N-terminus, the 396-residue chain is 1-deoxy-D-xylulose 5-phosphate reductoisomerase (396 aa).

Thr10, Gly11, Ser12, Ile13, and Asn123 together coordinate NADPH. Position 124 (Lys124) interacts with 1-deoxy-D-xylulose 5-phosphate. Glu125 serves as a coordination point for NADPH. Asp149 is a binding site for Mn(2+). 1-deoxy-D-xylulose 5-phosphate is bound by residues Ser150, Glu151, Ser185, and His208. Glu151 provides a ligand contact to Mn(2+). Residue Gly214 participates in NADPH binding. Ser221, Asn226, Lys227, and Glu230 together coordinate 1-deoxy-D-xylulose 5-phosphate. Glu230 contacts Mn(2+).

It belongs to the DXR family. The cofactor is Mg(2+). It depends on Mn(2+) as a cofactor.

It catalyses the reaction 2-C-methyl-D-erythritol 4-phosphate + NADP(+) = 1-deoxy-D-xylulose 5-phosphate + NADPH + H(+). It functions in the pathway isoprenoid biosynthesis; isopentenyl diphosphate biosynthesis via DXP pathway; isopentenyl diphosphate from 1-deoxy-D-xylulose 5-phosphate: step 1/6. In terms of biological role, catalyzes the NADPH-dependent rearrangement and reduction of 1-deoxy-D-xylulose-5-phosphate (DXP) to 2-C-methyl-D-erythritol 4-phosphate (MEP). In Shewanella baltica (strain OS223), this protein is 1-deoxy-D-xylulose 5-phosphate reductoisomerase.